We begin with the raw amino-acid sequence, 115 residues long: UPF0102 protein NMCC_2054 (115 aa).

It belongs to the UPF0102 family.

This chain is UPF0102 protein NMCC_2054, found in Neisseria meningitidis serogroup C (strain 053442).